A 566-amino-acid polypeptide reads, in one-letter code: Transcription factor tasR (566 aa).

Residues 1–30 (MISASRMEESASSSSLSDAAAPPPGAALQS) are compositionally biased toward low complexity. The disordered stretch occupies residues 1-31 (MISASRMEESASSSSLSDAAAPPPGAALQSI). Positions 35 to 68 (CDRCRFHKLKCNVPAAGHGGPVPCERCTRAKVPC) form a DNA-binding region, zn(2)-C6 fungal-type. 4 disordered regions span residues 72–174 (RRRR…PGQH), 346–382 (EFIVTNNPQKHLGSESSSSSSSSISNSSSNNEAGGDD), 422–453 (SESDGCGRGASRSGPNASPALRLGELPSTGTA), and 500–551 (RGVG…GLGG). 2 stretches are compositionally biased toward low complexity: residues 89–108 (PTRRATMPSPSPTPASTSAA) and 359–378 (SESSSSSSSSISNSSSNNEA). The segment covering 501–532 (GVGGGGGGGGGGGGGGGGGVGGGGGGGGGPGG) has biased composition (gly residues).

It is found in the nucleus. Functionally, transcription factor that regulates the expression of the gene cluster that mediates the biosynthesis of the tetramic acids Sch210971 and Sch210972, potential anti-HIV fungal natural product that contain a decalin core. This chain is Transcription factor tasR, found in Hapsidospora irregularis.